Consider the following 151-residue polypeptide: Flagellar assembly factor FliW (151 aa).

This sequence belongs to the FliW family. In terms of assembly, interacts with translational regulator CsrA and flagellin(s).

The protein resides in the cytoplasm. Its function is as follows. Acts as an anti-CsrA protein, binds CsrA and prevents it from repressing translation of its target genes, one of which is flagellin. Binds to flagellin and participates in the assembly of the flagellum. The sequence is that of Flagellar assembly factor FliW from Halalkalibacterium halodurans (strain ATCC BAA-125 / DSM 18197 / FERM 7344 / JCM 9153 / C-125) (Bacillus halodurans).